The primary structure comprises 435 residues: Enolase (435 aa).

Position 163 (glutamine 163) interacts with (2R)-2-phosphoglycerate. Glutamate 205 (proton donor) is an active-site residue. Residues aspartate 243, glutamate 292, and aspartate 319 each coordinate Mg(2+). Lysine 344, arginine 373, serine 374, and lysine 395 together coordinate (2R)-2-phosphoglycerate. Lysine 344 (proton acceptor) is an active-site residue.

This sequence belongs to the enolase family. Mg(2+) is required as a cofactor.

It is found in the cytoplasm. The protein localises to the secreted. Its subcellular location is the cell surface. The enzyme catalyses (2R)-2-phosphoglycerate = phosphoenolpyruvate + H2O. Its pathway is carbohydrate degradation; glycolysis; pyruvate from D-glyceraldehyde 3-phosphate: step 4/5. Catalyzes the reversible conversion of 2-phosphoglycerate (2-PG) into phosphoenolpyruvate (PEP). It is essential for the degradation of carbohydrates via glycolysis. The chain is Enolase from Streptococcus agalactiae serotype Ia (strain ATCC 27591 / A909 / CDC SS700).